The following is a 209-amino-acid chain: NAD(P)H-quinone oxidoreductase subunit I (209 aa).

2 4Fe-4S ferredoxin-type domains span residues 55-84 (GRIH…VDWE) and 95-124 (KHYS…MTEE). 8 residues coordinate [4Fe-4S] cluster: Cys-64, Cys-67, Cys-70, Cys-74, Cys-104, Cys-107, Cys-110, and Cys-114.

This sequence belongs to the complex I 23 kDa subunit family. In terms of assembly, NDH-1 is composed of at least 11 different subunits. [4Fe-4S] cluster is required as a cofactor.

It localises to the cellular thylakoid membrane. It catalyses the reaction a plastoquinone + NADH + (n+1) H(+)(in) = a plastoquinol + NAD(+) + n H(+)(out). It carries out the reaction a plastoquinone + NADPH + (n+1) H(+)(in) = a plastoquinol + NADP(+) + n H(+)(out). NDH-1 shuttles electrons from an unknown electron donor, via FMN and iron-sulfur (Fe-S) centers, to quinones in the respiratory and/or the photosynthetic chain. The immediate electron acceptor for the enzyme in this species is believed to be plastoquinone. Couples the redox reaction to proton translocation, and thus conserves the redox energy in a proton gradient. This Trichodesmium erythraeum (strain IMS101) protein is NAD(P)H-quinone oxidoreductase subunit I.